A 76-amino-acid polypeptide reads, in one-letter code: DNA gyrase inhibitor YacG (76 aa).

Cys-7, Cys-10, Cys-26, and Cys-30 together coordinate Zn(2+).

The protein belongs to the DNA gyrase inhibitor YacG family. As to quaternary structure, interacts with GyrB. Zn(2+) is required as a cofactor.

Inhibits all the catalytic activities of DNA gyrase by preventing its interaction with DNA. Acts by binding directly to the C-terminal domain of GyrB, which probably disrupts DNA binding by the gyrase. The chain is DNA gyrase inhibitor YacG from Pseudoalteromonas translucida (strain TAC 125).